The following is a 257-amino-acid chain: Short chain dehydrogenase ausX (257 aa).

Isoleucine 11, aspartate 57, arginine 119, tyrosine 151, lysine 155, and valine 184 together coordinate NADP(+). Catalysis depends on tyrosine 151, which acts as the Proton acceptor. Residue lysine 155 is the Lowers pKa of active site Tyr of the active site.

Belongs to the short-chain dehydrogenases/reductases (SDR) family.

It participates in secondary metabolite biosynthesis; terpenoid biosynthesis. In terms of biological role, short chain dehydrogenase; part of the gene cluster that mediates the biosynthesis of calidodehydroaustin, a fungal meroterpenoid. The first step of the pathway is the synthesis of 3,5-dimethylorsellinic acid by the polyketide synthase ausA. 3,5-dimethylorsellinic acid is then prenylated by the polyprenyl transferase ausN. Further epoxidation by the FAD-dependent monooxygenase ausM and cyclization by the probable terpene cyclase ausL lead to the formation of protoaustinoid A. Protoaustinoid A is then oxidized to spiro-lactone preaustinoid A3 by the combined action of the FAD-binding monooxygenases ausB and ausC, and the dioxygenase ausE. Acid-catalyzed keto-rearrangement and ring contraction of the tetraketide portion of preaustinoid A3 by ausJ lead to the formation of preaustinoid A4. The aldo-keto reductase ausK, with the help of ausH, is involved in the next step by transforming preaustinoid A4 into isoaustinone which is in turn hydroxylated by the P450 monooxygenase ausI to form austinolide. The cytochrome P450 monooxygenase ausG modifies austinolide to austinol. Austinol is further acetylated to austin by the O-acetyltransferase ausP, which spontaneously changes to dehydroaustin. The cytochrome P450 monooxygenase ausR then converts dehydroaustin is into 7-dehydrodehydroaustin. The hydroxylation catalyzed by ausR permits the O-acetyltransferase ausQ to add an additional acetyl group to the molecule, leading to the formation of acetoxydehydroaustin. The short chain dehydrogenase ausT catalyzes the reduction of the double bond present between carbon atoms 1 and 2 to convert 7-dehydrodehydroaustin into 1,2-dihydro-7-hydroxydehydroaustin. AusQ catalyzes not only an acetylation reaction but also the addition of the PKS ausV diketide product to 1,2-dihydro-7-hydroxydehydroaustin, forming precalidodehydroaustin. Finally, the iron/alpha-ketoglutarate-dependent dioxygenase converts precalidodehydroaustin into calidodehydroaustin. This Aspergillus calidoustus protein is Short chain dehydrogenase ausX.